Consider the following 725-residue polypeptide: Sesterterpene synthase btcA (725 aa).

The terpene cyclase stretch occupies residues 1-333 (MANPPVTEWK…CANCPRHHAW (333 aa)). A Mg(2+)-binding site is contributed by aspartate 100. Substrate is bound by residues aspartate 100, asparagine 236, 240–244 (SWGRE), and 329–330 (RH). The DDXXD 1 signature appears at 100–104 (DDATE). Positions 236–244 (NDYWSWGRE) match the NSE/DTE motif. Positions 334 to 722 (KEQDQAVHAV…MLYVLLQTLS (389 aa)) are prenyltransferase. The disordered stretch occupies residues 352-426 (VEAQSPSSAT…PSSLHLLKSP (75 aa)). Polar residues predominate over residues 355–364 (QSPSSATHTA). Low complexity predominate over residues 375–419 (APSPISSPSSSSSAKPSSSSAADSSSCTSTSQHSPSETDSTPPSS). Isopentenyl diphosphate contacts are provided by lysine 442, arginine 445, and histidine 474. Residues aspartate 481 and aspartate 485 each contribute to the Mg(2+) site. The short motif at 481 to 485 (DDIQD) is the DDXXD 2 element. Residue arginine 490 participates in dimethylallyl diphosphate binding. Arginine 491 serves as a coordination point for isopentenyl diphosphate. Dimethylallyl diphosphate contacts are provided by lysine 568, threonine 569, glutamine 604, asparagine 611, lysine 621, and lysine 631.

It in the N-terminal section; belongs to the terpene synthase family. The protein in the C-terminal section; belongs to the FPP/GGPP synthase family. In terms of assembly, hexamer. Mg(2+) serves as cofactor.

It carries out the reaction isopentenyl diphosphate + (2E,6E)-farnesyl diphosphate = (2E,6E,10E)-geranylgeranyl diphosphate + diphosphate. The enzyme catalyses isopentenyl diphosphate + (2E,6E,10E)-geranylgeranyl diphosphate = (2E,6E,10E,14E)-geranylfarnesyl diphosphate + diphosphate. It participates in secondary metabolite biosynthesis; terpenoid biosynthesis. Its function is as follows. Bifunctional terpene synthase; part of the gene cluster that mediates the biosynthesis of betaestacins. The bifunctional terpene synthase btcA converts isopentenyl diphosphate (IPP) and dimethylallyl diphosphate (DMAPP) into the sesterterpene betaestacin I. The C-terminal prenyltransferase (PT) domain of btcA catalyzes formation of GFPP, whereas the N-terminal terpene cyclase (TC) domain catalyzes the cyclization of GFPP into betaestacin I. The cytochrome P450 monooxygenase btcB is then responsible for the six-step oxidation of betaestacin I to yield betaestacin II. The roles of the cytochrome P450 monooxygenase btcC and the alpha-ketoglutarate-dependent dioxygenase btcD have not been identified yet. The chain is Sesterterpene synthase btcA from Neocamarosporium betae (Beet black rot fungus).